Here is an 804-residue protein sequence, read N- to C-terminus: Endoplasmin (804 aa).

Positions 1 to 21 (MRALWVLGLCCVLLTFGSVRA) are cleaved as a signal peptide. The SRT pseudosubstrate motif motif lies at 42–44 (SRT). The N-linked (GlcNAc...) asparagine glycan is linked to N62. S64 carries the phosphoserine modification. N107 carries an N-linked (GlcNAc...) asparagine glycan. Positions 107, 149, and 162 each coordinate ATP. K168 carries the post-translational modification N6-(2-hydroxyisobutyryl)lysine. S172 carries the phosphoserine modification. ATP is bound at residue F199. N217 carries an N-linked (GlcNAc...) asparagine glycan. The segment at 288-323 (TVEEPMEEEEAAKEEKEESDDEAAVEEEEEEKKPKT) is disordered. Over residues 289-317 (VEEPMEEEEAAKEEKEESDDEAAVEEEEE) the composition is skewed to acidic residues. 2 positions are modified to phosphoserine: S306 and S403. Residue K404 is modified to N6-succinyllysine. N445 carries N-linked (GlcNAc...) asparagine glycosylation. S447 carries the phosphoserine modification. Position 479 is an N6-acetyllysine (K479). N481 and N502 each carry an N-linked (GlcNAc...) asparagine glycan. Residue K633 is modified to N6-succinyllysine. The segment at 750–804 (DPDAKVEEEPEEEPEETTEDTTEDTEQDDDEEMDAGADEEEQETSETSTAEKDEL) is disordered. A compositionally biased stretch (acidic residues) spans 757-793 (EEPEEEPEETTEDTTEDTEQDDDEEMDAGADEEEQET). A Prevents secretion from ER motif is present at residues 801-804 (KDEL).

Belongs to the heat shock protein 90 family. Homodimer; disulfide-linked. Component of an EIF2 complex at least composed of CELF1/CUGBP1, CALR, CALR3, EIF2S1, EIF2S2, HSP90B1 and HSPA5. Part of a large chaperone multiprotein complex comprising DNAJB11, HSP90B1, HSPA5, HYOU, PDIA2, PDIA4, PDIA6, PPIB, SDF2L1, UGGT1 and very small amounts of ERP29, but not, or at very low levels, CALR nor CANX. Interacts with AIMP1; regulates its retention in the endoplasmic reticulum. Hyperglycosylated form interacts with OS9; promoting its degradation by the endoplasmic reticulum associated degradation (ERAD). Interacts with CNPY3. This interaction is disrupted in the presence of ATP. Interacts with TLR4 and TLR9, but not with TLR3. Interacts with MZB1 in a calcium-dependent manner. Interacts with METTL23. Interacts with IL1B; the interaction facilitates cargo translocation into the ERGIC. Interacts with EIF2AK3. Phosphorylated by CK2. In terms of processing, N-glycosylated cotranslationally at Asn-217 by STT3A-containing OST-A complex: this glycosylation is constitutive. In response to various stress, 5 additional facultative sites (Asn-62, Asn-107, Asn-445, Asn-481 and Asn-502) can be glycosylated post-translationally by STT3B-containing OST-B complex, leading to a hyperglycosylated form that is degraded by the ER-associated degradation (ERAD) pathway. In normal conditions, the OST-A complex together with CCDC134 prevent glycosylation at facultative sites during protein folding, thereby preventing hyperglycosylation. Mechanistically, nascent HSP90B1 is tethered during translation to a specialized CCDC134-containing translocon that forms a microenvironment for its folding, in which STT3A associates with the SRT pseudosubstrate motif, and prevents access to facultative glycosylation sites until folding is completed, rendering its facultative sites inaccessible to the OST-B complex.

It is found in the endoplasmic reticulum lumen. The protein resides in the sarcoplasmic reticulum lumen. It localises to the melanosome. It carries out the reaction ATP + H2O = ADP + phosphate + H(+). Functionally, ATP-dependent chaperone involved in the processing of proteins in the endoplasmic reticulum, regulating their transport. Together with MESD, acts as a modulator of the Wnt pathway by promoting the folding of LRP6, a coreceptor of the canonical Wnt pathway. When associated with CNPY3, required for proper folding of Toll-like receptors. Promotes folding and trafficking of TLR4 to the cell surface. May participate in the unfolding of cytosolic leaderless cargos (lacking the secretion signal sequence) such as the interleukin 1/IL-1 to facilitate their translocation into the ERGIC (endoplasmic reticulum-Golgi intermediate compartment) and secretion; the translocation process is mediated by the cargo receptor TMED10. In Sus scrofa (Pig), this protein is Endoplasmin (HSP90B1).